Reading from the N-terminus, the 277-residue chain is Ribosomal RNA small subunit methyltransferase A (277 aa).

Positions 27, 29, 54, 75, 95, and 118 each coordinate S-adenosyl-L-methionine.

Belongs to the class I-like SAM-binding methyltransferase superfamily. rRNA adenine N(6)-methyltransferase family. RsmA subfamily.

It localises to the cytoplasm. It catalyses the reaction adenosine(1518)/adenosine(1519) in 16S rRNA + 4 S-adenosyl-L-methionine = N(6)-dimethyladenosine(1518)/N(6)-dimethyladenosine(1519) in 16S rRNA + 4 S-adenosyl-L-homocysteine + 4 H(+). Its function is as follows. Specifically dimethylates two adjacent adenosines (A1518 and A1519) in the loop of a conserved hairpin near the 3'-end of 16S rRNA in the 30S particle. May play a critical role in biogenesis of 30S subunits. In Chlamydia muridarum (strain MoPn / Nigg), this protein is Ribosomal RNA small subunit methyltransferase A.